Consider the following 456-residue polypeptide: Putrescine--pyruvate aminotransferase (456 aa).

Y156 provides a ligand contact to substrate. D262 is a pyridoxal 5'-phosphate binding site. K291 is modified (N6-(pyridoxal phosphate)lysine). Residues G322 and R417 each contribute to the substrate site.

This sequence belongs to the class-III pyridoxal-phosphate-dependent aminotransferase family. Pyridoxal 5'-phosphate serves as cofactor.

It carries out the reaction putrescine + pyruvate = 4-aminobutanal + L-alanine. It participates in amine and polyamine degradation; putrescine degradation; 4-aminobutanal from putrescine (transaminase route). In terms of biological role, involved in the putrescine catabolism. Catalyzes the transfer of the amino group from putrescine to pyruvate to yield 4-aminobutanal and alanine. This Pseudomonas aeruginosa (strain ATCC 15692 / DSM 22644 / CIP 104116 / JCM 14847 / LMG 12228 / 1C / PRS 101 / PAO1) protein is Putrescine--pyruvate aminotransferase.